The sequence spans 35 residues: Photosystem II reaction center protein T (35 aa).

A helical membrane pass occupies residues Ala3–Phe23.

This sequence belongs to the PsbT family. As to quaternary structure, PSII is composed of 1 copy each of membrane proteins PsbA, PsbB, PsbC, PsbD, PsbE, PsbF, PsbH, PsbI, PsbJ, PsbK, PsbL, PsbM, PsbT, PsbY, PsbZ, Psb30/Ycf12, at least 3 peripheral proteins of the oxygen-evolving complex and a large number of cofactors. It forms dimeric complexes.

Its subcellular location is the plastid. It localises to the chloroplast thylakoid membrane. Its function is as follows. Found at the monomer-monomer interface of the photosystem II (PS II) dimer, plays a role in assembly and dimerization of PSII. PSII is a light-driven water plastoquinone oxidoreductase, using light energy to abstract electrons from H(2)O, generating a proton gradient subsequently used for ATP formation. The polypeptide is Photosystem II reaction center protein T (Cedrus deodara (Deodar cedar)).